A 360-amino-acid polypeptide reads, in one-letter code: Peptide chain release factor 1 (360 aa).

Glutamine 235 carries the post-translational modification N5-methylglutamine. The segment at 286-313 (RQQAEASTRRNLLGSGDRSDRNRTYNFP) is disordered.

This sequence belongs to the prokaryotic/mitochondrial release factor family. Methylated by PrmC. Methylation increases the termination efficiency of RF1.

It localises to the cytoplasm. In terms of biological role, peptide chain release factor 1 directs the termination of translation in response to the peptide chain termination codons UAG and UAA. The polypeptide is Peptide chain release factor 1 (Cronobacter sakazakii (strain ATCC BAA-894) (Enterobacter sakazakii)).